Reading from the N-terminus, the 235-residue chain is Octanoyltransferase LIP2, mitochondrial (235 aa).

The N-terminal 32 residues, 1–32 (MRSPRTLEVWKLGTVNYLKSLKLQEKLVSERK), are a transit peptide targeting the mitochondrion. Residues 34 to 218 (HQIPDTLLSL…CLAKAFSYDD (185 aa)) form the BPL/LPL catalytic domain. Substrate is bound by residues 79–86 (RGGDITFH), 147–149 (AIG), and 160–162 (GLA). Cys178 (acyl-thioester intermediate) is an active-site residue.

This sequence belongs to the LipB family. In terms of tissue distribution, expressed in leaves. Expressed in roots, rosette leaves, cauline leaves, stems and siliques.

The protein localises to the mitochondrion. The enzyme catalyses octanoyl-[ACP] + L-lysyl-[protein] = N(6)-octanoyl-L-lysyl-[protein] + holo-[ACP] + H(+). It participates in protein modification; protein lipoylation via endogenous pathway; protein N(6)-(lipoyl)lysine from octanoyl-[acyl-carrier-protein]: step 1/2. In terms of biological role, catalyzes the transfer of endogenously produced octanoic acid from octanoyl-acyl-carrier-protein onto the lipoyl domains of lipoate-dependent enzymes. Lipoyl-ACP can also act as a substrate although octanoyl-ACP is likely to be the physiological substrate. Together with LIP1 is essential for mitochondrial protein lipoylation during seed development. Required for the lipoylation of mitochondrial 2-oxoglutarate dehydrogenase component E2 proteins in leaves and roots. This is Octanoyltransferase LIP2, mitochondrial from Arabidopsis thaliana (Mouse-ear cress).